The sequence spans 248 residues: Ribonuclease PH (248 aa).

Phosphate-binding positions include Arg-86 and 124–126 (GTR).

It belongs to the RNase PH family. In terms of assembly, homohexameric ring arranged as a trimer of dimers.

The catalysed reaction is tRNA(n+1) + phosphate = tRNA(n) + a ribonucleoside 5'-diphosphate. Functionally, phosphorolytic 3'-5' exoribonuclease that plays an important role in tRNA 3'-end maturation. Removes nucleotide residues following the 3'-CCA terminus of tRNAs; can also add nucleotides to the ends of RNA molecules by using nucleoside diphosphates as substrates, but this may not be physiologically important. Probably plays a role in initiation of 16S rRNA degradation (leading to ribosome degradation) during starvation. The chain is Ribonuclease PH from Clostridium kluyveri (strain NBRC 12016).